The sequence spans 192 residues: Ferritin-like protein (192 aa).

Fe(3+) contacts are provided by His-44, Glu-48, and His-102. The interval 143-179 (RFDHDYADPHAHHDEHRDHLADMPSAGSSHEEVQPVA) is linker. Basic and acidic residues predominate over residues 149–163 (ADPHAHHDEHRDHLA). The tract at residues 149-192 (ADPHAHHDEHRDHLADMPSAGSSHEEVQPVAHKKKGFTVGSLIQ) is disordered. Positions 180–192 (HKKKGFTVGSLIQ) are targeting peptide.

In terms of assembly, homodimer, with 2 Fe atoms bound at the subunit interface (without encapsulin), probably also a dimer when encapsulated. 42 electron-dense accretions can be seen inside the nanocompartment which are probably this cargo protein, although perhaps up to one cargo dimer can be bound per shell protein.

Its subcellular location is the encapsulin nanocompartment. It catalyses the reaction 4 Fe(2+) + O2 + 4 H(+) = 4 Fe(3+) + 2 H2O. Functionally, cargo protein of a type 1 encapsulin nanocompartment. A ferritin-like iron-binding protein probably involved in iron mineralization in the encapsulin nanocompartment. Has ferroxidase activity even when encapsulated, the rate is probably controlled by the rate of Fe flux across the nanocompartment pores. Part of the iron-mineralizing encapsulin-associated Firmicute (IMEF) system. 2 different cargo proteins have been identified (IMEF and Fer); when both are expressed in E.coli with the shell protein only IMEF is detected within the nanocompartment. E.coli expressing all 3 genes stores the largest amount of iron and is protected from Fe/H2O2-induced oxidative stress. In Bacillus thermotolerans (Quasibacillus thermotolerans), this protein is Ferritin-like protein.